The following is a 354-amino-acid chain: MEKQIFEHSVNVEEEHYQPKQEFHNMEAKLDEALDGELLDAQLEQALKPKSSFRKTLLKFTALLFGLATVAQSVQWIWDSYQKHQWIYLAFALVSLIIILLGIKEIICEWRRLVRLKKREQWQQQSQQIWLESAVKNGDVFSVHNAEKSKILCLDIAKSLGLENDSPTVIQWQHQLNEAYSAQEIAHLFSRHVLSSFDAQAKKLISKMAAESAVIVAISPLAVVDMFFIAWRNLRLMNKIAEIYGIELGYFPRIRLLRMVLVNIAFAGATEVAQDIGMDWLSQDVTAKLSTRIAQGIGVGLLTARLGVKAMELCRPLAFQLNEKPKLSHIQQELLSSVKDIVLGKNKIYKKEQI.

A run of 3 helical transmembrane segments spans residues 57–77 (LLKFTALLFGLATVAQSVQWI), 87–107 (IYLAFALVSLIIILLGIKEII), and 211–231 (ESAVIVAISPLAVVDMFFIAW).

The protein belongs to the UPF0283 family.

The protein localises to the cell inner membrane. This chain is UPF0283 membrane protein HI_0043, found in Haemophilus influenzae (strain ATCC 51907 / DSM 11121 / KW20 / Rd).